The sequence spans 523 residues: GMP synthase [glutamine-hydrolyzing] (523 aa).

Residues 8–205 (KILILDFGSQ…VVDICGCETN (198 aa)) enclose the Glutamine amidotransferase type-1 domain. Residue Cys-85 is the Nucleophile of the active site. Active-site residues include His-179 and Glu-181. In terms of domain architecture, GMPS ATP-PPase spans 206–398 (WTAENIIEDA…LGLPAEMLNR (193 aa)). 233-239 (SGGVDSS) serves as a coordination point for ATP.

Homodimer.

The enzyme catalyses XMP + L-glutamine + ATP + H2O = GMP + L-glutamate + AMP + diphosphate + 2 H(+). It participates in purine metabolism; GMP biosynthesis; GMP from XMP (L-Gln route): step 1/1. Catalyzes the synthesis of GMP from XMP. This is GMP synthase [glutamine-hydrolyzing] from Histophilus somni (strain 129Pt) (Haemophilus somnus).